Here is a 475-residue protein sequence, read N- to C-terminus: MSALKAVFQYIDENQDRYVKKLAEWVAIQSVSAWPEKRGEIRRMMEVAAADVQRLGGSVELVDIGKQKLPDGSEIPLPPILLGKLGSDPQKKTVCIYGHLDVQPAALEDGWDSEPFTLVEREGKLYGRGSTDDKGPVAGWMNALEAYQKTGQEIPVNLRFCLEGMEESGSEGLDELIFAQKDKFFKDVDYVCISDNYWLGKNKPCITYGLRGICYFFIEVECSDKDLHSGVYGGSVHEAMTDLISLMGCLVDKKGKILIPGINDAVAPVTDEEHALYDHIDFDMEEFAKDVGAETLLHSCKKDILMHRWRYPSLSLHGIEGAFSGSGAKTVIPRKVVGKFSIRLVPDMIPEVVSEQVSSYLSKKFAELQSPNKFKVYMGHGGKPWVSDFNHPHYQAGRRALKTVFGVEPDLTREGGSIPVTLTFQEATGKNVMLLPVGSADDGAHSQNEKLNRLNYIEGTKMLAAYLYEVSQLKN.

At Ser-58 the chain carries Phosphoserine. His-99 is a binding site for Mn(2+). The active site involves Asp-101. Asp-132 contacts Mn(2+). Glu-166 functions as the Proton acceptor in the catalytic mechanism. Substrate is bound by residues 166 to 167 (EE), Asp-195, and His-228. Mn(2+) is bound by residues Glu-167 and Asp-195. Position 299 is a phosphoserine (Ser-299). 4 residues coordinate substrate: Thr-330, Arg-343, Ser-417, and His-445. His-445 contacts Mn(2+).

Belongs to the peptidase M20A family. In terms of assembly, homodimer. Mn(2+) serves as cofactor. In terms of tissue distribution, highly expressed in the parafascicular nucleus of the thalamus, tuberomammillary nucleus of the hypothalamus and the mitral cell layer of the olfactory bulb.

It is found in the cytoplasm. The catalysed reaction is Hydrolysis of dipeptides, preferentially hydrophobic dipeptides including prolyl amino acids.. It carries out the reaction L-threonyl-L-threonine + H2O = 2 L-threonine. The enzyme catalyses L-threonyl-L-serine + H2O = L-threonine + L-serine. It catalyses the reaction L-seryl-L-threonine + H2O = L-threonine + L-serine. The catalysed reaction is L-cysteinylglycine + H2O = L-cysteine + glycine. It carries out the reaction L-alanyl-L-cysteine + H2O = L-cysteine + L-alanine. The enzyme catalyses (S)-lactate + L-phenylalanine = N-[(S)-lactoyl]-L-phenylalanine + H2O. Inhibited by bestatin. In terms of biological role, catalyzes the peptide bond hydrolysis in dipeptides, displaying a non-redundant activity toward threonyl dipeptides. Mediates threonyl dipeptide catabolism in a tissue-specific way. Has high dipeptidase activity toward cysteinylglycine, an intermediate metabolite in glutathione metabolism. Metabolizes N-lactoyl-amino acids, both through hydrolysis to form lactic acid and amino acids, as well as through their formation by reverse proteolysis. Plays a role in the regulation of cell cycle arrest and apoptosis. The sequence is that of Cytosolic non-specific dipeptidase (Cndp2) from Mus musculus (Mouse).